The primary structure comprises 410 residues: Protein trichome birefringence-like 34 (410 aa).

Residues T13 to L33 form a helical; Signal-anchor for type II membrane protein membrane-spanning segment. A GDS motif motif is present at residues G133–S135. Positions D383 to N397 match the DCXHWCLPGXXDXWN motif motif.

Belongs to the PC-esterase family. TBL subfamily.

Its subcellular location is the golgi apparatus membrane. In terms of biological role, may act as a bridging protein that binds pectin and other cell wall polysaccharides. Probably involved in maintaining esterification of pectins. May be involved in the specific O-acetylation of cell wall polymers. The protein is Protein trichome birefringence-like 34 (TBL34) of Arabidopsis thaliana (Mouse-ear cress).